The chain runs to 281 residues: 4-diphosphocytidyl-2-C-methyl-D-erythritol kinase (281 aa).

Residue K11 is part of the active site. 92–102 (LVSAGLAGGSA) contributes to the ATP binding site. D132 is a catalytic residue.

The protein belongs to the GHMP kinase family. IspE subfamily.

The enzyme catalyses 4-CDP-2-C-methyl-D-erythritol + ATP = 4-CDP-2-C-methyl-D-erythritol 2-phosphate + ADP + H(+). It participates in isoprenoid biosynthesis; isopentenyl diphosphate biosynthesis via DXP pathway; isopentenyl diphosphate from 1-deoxy-D-xylulose 5-phosphate: step 3/6. Its function is as follows. Catalyzes the phosphorylation of the position 2 hydroxy group of 4-diphosphocytidyl-2C-methyl-D-erythritol. The polypeptide is 4-diphosphocytidyl-2-C-methyl-D-erythritol kinase (Ehrlichia ruminantium (strain Welgevonden)).